A 247-amino-acid polypeptide reads, in one-letter code: Peptidyl-prolyl cis-trans isomerase FKBP17-2, chloroplastic (247 aa).

Residues 1-79 constitute a chloroplast transit peptide; that stretch reads MANLFTATAP…SSLTRRFGIG (79 aa). The segment at 26 to 64 is disordered; the sequence is QCYASSSNPPEPESSSPPPPPPPPQPLASQQKRKKNVET. A compositionally biased stretch (pro residues) spans 34-51; that stretch reads PPEPESSSPPPPPPPPQP. The PPIase FKBP-type domain maps to 141–243; that stretch reads GDLVVIDLKG…EYIVEIDRVS (103 aa).

It belongs to the FKBP-type PPIase family.

The protein localises to the plastid. It is found in the chloroplast thylakoid lumen. The catalysed reaction is [protein]-peptidylproline (omega=180) = [protein]-peptidylproline (omega=0). In terms of biological role, PPIases accelerate the folding of proteins. It catalyzes the cis-trans isomerization of proline imidic peptide bonds in oligopeptides. The chain is Peptidyl-prolyl cis-trans isomerase FKBP17-2, chloroplastic (FKBP17-2) from Arabidopsis thaliana (Mouse-ear cress).